The following is a 680-amino-acid chain: Forkhead box protein P4 (680 aa).

Residues 1–17 (MMVESASETIRSAPSGQ) are compositionally biased toward polar residues. Positions 1-56 (MMVESASETIRSAPSGQNGVGSLSGQADGSSGGATGTTASGTGREVTTGADSNGEM) are disordered. A phosphoserine mark is found at Ser52 and Ser86. Residues Lys175 and Lys246 each participate in a glycyl lysine isopeptide (Lys-Gly) (interchain with G-Cter in SUMO2) cross-link. Residues 262–306 (FAAPPKVSPPLSHHTLPNGQPTVLTSRRDSSSHEETPGSHPLYGH) are disordered. The span at 276–286 (TLPNGQPTVLT) shows a compositional bias: polar residues. A compositionally biased stretch (basic and acidic residues) spans 287–298 (SRRDSSSHEETP). Residues 307 to 332 (GECKWPGCETLCEDLGQFIKHLNTEH) form a C2H2-type zinc finger. The tract at residues 349 to 370 (VQQLEIQLAKESERLQAMMAHL) is leucine-zipper. A Glycyl lysine isopeptide (Lys-Gly) (interchain with G-Cter in SUMO2) cross-link involves residue Lys378. Residues 407–445 (GLVHPPTSAAAPVTPLRPPGLGSASLHGGGPARRRSSDK) form a disordered region. Residues 467 to 559 (RPPFTYASLI…KMTGSPTLVK (93 aa)) constitute a DNA-binding region (fork-head). Ser554 is modified (phosphoserine). The segment at 602–680 (PLSHDDVGAP…EEELPGEELS (79 aa)) is disordered. Residues 617–635 (SNGSSSPPRLSPPQYSHQV) show a composition bias toward polar residues. Residues 668–680 (RDLEEELPGEELS) are compositionally biased toward acidic residues.

In terms of assembly, forms homodimers and heterodimers with FOXP1 and FOXP2. Dimerization is required for DNA-binding.

It is found in the nucleus. Transcriptional repressor that represses lung-specific expression. This Homo sapiens (Human) protein is Forkhead box protein P4 (FOXP4).